Here is a 1336-residue protein sequence, read N- to C-terminus: Vascular endothelial growth factor receptor 1 (1336 aa).

The signal sequence occupies residues 1–22 (MVSCWDTAVLPCALLGCLLLTG). Residues 23-758 (YCSGSKLKGP…QGTSDKSNLE (736 aa)) lie on the Extracellular side of the membrane. 7 consecutive Ig-like C2-type domains span residues 32–121 (PELS…KKME), 151–214 (GREL…VNGH), 230–327 (LDVQ…TSVH), 335–421 (SVKH…LTAT), 429–549 (QIYE…RDIR), 556–655 (PNGF…EVLV), and 661–747 (PLLL…AYLT). Intrachain disulfides connect Cys-53-Cys-107 and Cys-158-Cys-207. Residues Asn-100, Asn-164, Asn-196, and Asn-251 are each glycosylated (N-linked (GlcNAc...) asparagine). A disulfide bond links Cys-252 and Cys-311. 8 N-linked (GlcNAc...) asparagine glycosylation sites follow: Asn-323, Asn-417, Asn-474, Asn-516, Asn-597, Asn-625, Asn-666, and Asn-713. 2 disulfide bridges follow: Cys-454–Cys-535 and Cys-577–Cys-636. Residues Cys-682 and Cys-731 are joined by a disulfide bond. The helical transmembrane segment at 759–780 (LITLTCTCVAATLFWLLLTLFI) threads the bilayer. The Cytoplasmic segment spans residues 781–1336 (RKLKRSSSEV…SVVLYSSPPA (556 aa)). The Protein kinase domain occupies 827–1158 (LKLGKSLGRG…ELVEKLGDLL (332 aa)). Residues 833 to 841 (LGRGAFGKV) and Lys-861 contribute to the ATP site. At Tyr-914 the chain carries Phosphotyrosine; by autocatalysis. Over residues 941–957 (KKEKLEPDLEQDQKPRL) the composition is skewed to basic and acidic residues. Residues 941-982 (KKEKLEPDLEQDQKPRLDSVSSSESFTSSGFQEDKSVSDVEG) form a disordered region. A compositionally biased stretch (low complexity) spans 959 to 969 (SVSSSESFTSS). Catalysis depends on Asp-1022, which acts as the Proton acceptor. Phosphotyrosine; by autocatalysis is present on residues Tyr-1053, Tyr-1169, Tyr-1213, Tyr-1242, Tyr-1325, and Tyr-1331. A disordered region spans residues 1304 to 1326 (RQEDEDDPELGKESCCSPPPDYN).

It belongs to the protein kinase superfamily. Tyr protein kinase family. CSF-1/PDGF receptor subfamily. As to quaternary structure, interacts with VEGFA, VEGFB and PGF. Monomer in the absence of bound VEGFA, VEGFB or PGF. Homodimer in the presence of bound VEGFA, VEGFB and PGF. Can also form a heterodimer with KDR. Interacts (tyrosine phosphorylated) with CBL, CRK, GRB2, NCK1, PIK3R1, PLCG, PSEN1 and PTPN11. Probably interacts with PTPRB. Interacts with RACK1. Identified in a complex with CBL and CD2AP. In terms of processing, N-glycosylated. Ubiquitinated after VEGFA-mediated autophosphorylation, leading to proteolytic degradation. Post-translationally, autophosphorylated on tyrosine residues upon ligand binding. Autophosphorylation occurs in trans, i.e. one subunit of the dimeric receptor phosphorylates tyrosine residues on the other subunit. Phosphorylation at Tyr-1169 is important for interaction with PLCG. Phosphorylation at Tyr-1213 is important for interaction with PIK3R1, PTPN11, GRB2, and PLCG. Phosphorylation at Tyr-1331 is important for endocytosis and for interaction with CBL, NCK1 and CRK. Is probably dephosphorylated by PTPRB.

Its subcellular location is the cell membrane. The protein resides in the endosome. The catalysed reaction is L-tyrosyl-[protein] + ATP = O-phospho-L-tyrosyl-[protein] + ADP + H(+). Its activity is regulated as follows. Present in an inactive conformation in the absence of bound ligand. Binding of VEGFA, VEGFB or PGF leads to dimerization and activation by autophosphorylation on tyrosine residues. Its function is as follows. Tyrosine-protein kinase that acts as a cell-surface receptor for VEGFA, VEGFB and PGF, and plays an essential role in the development of embryonic vasculature, the regulation of angiogenesis, cell survival, cell migration, macrophage function, chemotaxis, and cancer cell invasion. Acts as a positive regulator of postnatal retinal hyaloid vessel regression. May play an essential role as a negative regulator of embryonic angiogenesis by inhibiting excessive proliferation of endothelial cells. Can promote endothelial cell proliferation, survival and angiogenesis in adulthood. Its function in promoting cell proliferation seems to be cell-type specific. Promotes PGF-mediated proliferation of endothelial cells, and proliferation of some types of cancer cells, but does not promote proliferation of normal fibroblasts. Has very high affinity for VEGFA and relatively low protein kinase activity; may function as a negative regulator of VEGFA signaling by limiting the amount of free VEGFA and preventing its binding to KDR. Modulates KDR signaling by forming heterodimers with KDR. Ligand binding leads to the activation of several signaling cascades. Activation of PLCG leads to the production of the cellular signaling molecules diacylglycerol and inositol 1,4,5-trisphosphate and the activation of protein kinase C. Mediates phosphorylation of PIK3R1, the regulatory subunit of phosphatidylinositol 3-kinase, leading to the activation of phosphatidylinositol kinase and the downstream signaling pathway. Mediates activation of MAPK1/ERK2, MAPK3/ERK1 and the MAP kinase signaling pathway, as well as of the AKT1 signaling pathway. Phosphorylates SRC, YES1 and PLCG, and may also phosphorylate CBL. Promotes phosphorylation of AKT1 and PTK2/FAK1. The protein is Vascular endothelial growth factor receptor 1 (Flt1) of Rattus norvegicus (Rat).